The chain runs to 518 residues: Bifunctional purine biosynthesis protein PurH (518 aa).

The MGS-like domain occupies 1–146 (MARIALISVS…KNHESVSILT (146 aa)).

The protein belongs to the PurH family.

It carries out the reaction (6R)-10-formyltetrahydrofolate + 5-amino-1-(5-phospho-beta-D-ribosyl)imidazole-4-carboxamide = 5-formamido-1-(5-phospho-D-ribosyl)imidazole-4-carboxamide + (6S)-5,6,7,8-tetrahydrofolate. The catalysed reaction is IMP + H2O = 5-formamido-1-(5-phospho-D-ribosyl)imidazole-4-carboxamide. The protein operates within purine metabolism; IMP biosynthesis via de novo pathway; 5-formamido-1-(5-phospho-D-ribosyl)imidazole-4-carboxamide from 5-amino-1-(5-phospho-D-ribosyl)imidazole-4-carboxamide (10-formyl THF route): step 1/1. Its pathway is purine metabolism; IMP biosynthesis via de novo pathway; IMP from 5-formamido-1-(5-phospho-D-ribosyl)imidazole-4-carboxamide: step 1/1. This chain is Bifunctional purine biosynthesis protein PurH, found in Prochlorococcus marinus (strain MIT 9211).